The sequence spans 847 residues: Glucans biosynthesis glucosyltransferase H (847 aa).

The Cytoplasmic segment spans residues 1–138 (MNKTTEYIDA…KWRTVGTIRR (138 aa)). Residues 139 to 156 (YILLILTLAQTVVATWYM) traverse the membrane as a helical segment. The Periplasmic segment spans residues 157-193 (KTILPYQGWALINPMDMVGQDIWVSFMQLLPYMLQTG). A helical membrane pass occupies residues 194-216 (ILILFAVLFCWVSAGFWTALMGF). Over 217–511 (LQLLIGRDKY…LVKGMHPVHR (295 aa)) the chain is Cytoplasmic. Residues 512–534 (AVFLTGVMSYLSAPLWFMFLALS) traverse the membrane as a helical segment. The Periplasmic segment spans residues 535 to 567 (TALQVVHALTEPQYFLQPRQLFPVWPQWRPELA). A helical membrane pass occupies residues 568–590 (IALFASTMVLLFLPKLLSIMLIW). Over 591–602 (CKGTKEYGGFWR) the chain is Cytoplasmic. The chain crosses the membrane as a helical span at residues 603-625 (VTLSLLLEVLFSVLLAPVRMLFH). Topologically, residues 626 to 679 (TVFVVSAFLGWEVVWNSPQRDDDSTPWGEAFMRHGSQLLLGLVWAVGMAWLDLR) are periplasmic. Residues 680–702 (FLFWLAPIVFSLILSPFVSVISS) form a helical membrane-spanning segment. Over 703–847 (RSTVGLRTKR…ALQGRTSSAR (145 aa)) the chain is Cytoplasmic.

It belongs to the glycosyltransferase 2 family. OpgH subfamily.

It is found in the cell inner membrane. It participates in glycan metabolism; osmoregulated periplasmic glucan (OPG) biosynthesis. In terms of biological role, involved in the biosynthesis of osmoregulated periplasmic glucans (OPGs). The sequence is that of Glucans biosynthesis glucosyltransferase H from Salmonella typhimurium (strain LT2 / SGSC1412 / ATCC 700720).